The sequence spans 346 residues: Small ribosomal subunit biogenesis GTPase RsgA (346 aa).

The CP-type G domain maps to 98-261 (VQGGRGPQLA…VIDTPGMRTL (164 aa)). Residues 148-151 (TKAD) and 200-208 (GSSGVGKST) each bind GTP. Positions 284, 289, 291, and 297 each coordinate Zn(2+). The disordered stretch occupies residues 317–346 (RKLSDENQHNTPVQSGPRGAKSPAGRGKRR).

Belongs to the TRAFAC class YlqF/YawG GTPase family. RsgA subfamily. As to quaternary structure, monomer. Associates with 30S ribosomal subunit, binds 16S rRNA. Requires Zn(2+) as cofactor.

The protein resides in the cytoplasm. Its function is as follows. One of several proteins that assist in the late maturation steps of the functional core of the 30S ribosomal subunit. Helps release RbfA from mature subunits. May play a role in the assembly of ribosomal proteins into the subunit. Circularly permuted GTPase that catalyzes slow GTP hydrolysis, GTPase activity is stimulated by the 30S ribosomal subunit. This chain is Small ribosomal subunit biogenesis GTPase RsgA, found in Mesorhizobium japonicum (strain LMG 29417 / CECT 9101 / MAFF 303099) (Mesorhizobium loti (strain MAFF 303099)).